We begin with the raw amino-acid sequence, 149 residues long: Oligosaccharyltransferase complex subunit ostc-B (149 aa).

The Cytoplasmic portion of the chain corresponds to 1 to 32; it reads MESLYRIPFTVLECPNLKLKKPSWLHMPSAMT. The helical transmembrane segment at 33–53 threads the bilayer; it reads VYAMVVVSYFLITGGIIYDVI. The Extracellular segment spans residues 54-83; sequence VEPPSVGSMTDEHGHQRPVAFLAYRVNGQY. A helical transmembrane segment spans residues 84 to 104; sequence IMEGLASSFLFTMGGLGFIIL. Over 105 to 117 the chain is Cytoplasmic; it reads DRSNAPNIPKLNR. A helical membrane pass occupies residues 118–138; sequence FLLLFIGFVCVLLSFFMARVF. Residues 139–149 are Extracellular-facing; it reads MRMKLPGYLMG.

The protein belongs to the OSTC family. In terms of assembly, specific component of the STT3A-containing form of the oligosaccharyltransferase (OST) complex.

It localises to the membrane. The protein operates within protein modification; protein glycosylation. Its function is as follows. Specific component of the STT3A-containing form of the oligosaccharyl transferase (OST) complex that catalyzes the initial transfer of a defined glycan (Glc(3)Man(9)GlcNAc(2) in eukaryotes) from the lipid carrier dolichol-pyrophosphate to an asparagine residue within an Asn-X-Ser/Thr consensus motif in nascent polypeptide chains, the first step in protein N-glycosylation. N-glycosylation occurs cotranslationally and the complex associates with the Sec61 complex at the channel-forming translocon complex that mediates protein translocation across the endoplasmic reticulum (ER). All subunits are required for a maximal enzyme activity. The sequence is that of Oligosaccharyltransferase complex subunit ostc-B from Xenopus laevis (African clawed frog).